The chain runs to 641 residues: MLDDIRGPGDLQGLSKRELDLLADEIREFLIHKVAATGGHLGPNLGVVELSLALHRVFESPYDPIIFDTGHQAYVHKILTGRAGDFDTLRQKDGLSGYPSRAESEHDWVESSHASTALSYADGLAKAFELTGQRRRHVVAVVGDGAMTGGMCWEALNNIAAAEHRRIIIVVNDNGRSYAPTIGGLASHLAGLRLTPSYEKVLDESKKLLRGMPVVGPLAYALMHSLKVGVKDAVSPQVMFTDLGLKYVGPVDGHDEHAVEDALRRARGYGGPVIVHVITRKGMGYAPAEDDEAEQMHSTGIIDPKTGRAIKASAPGWTSVFSDALIDVASEHRNIVAITAAMPGPTGLSKFGERFPDRLFDVGIAEQHAVTSAAGLAMGGLHPVVAIYSTFLNRAFDQVMMDVALHRLPVTFVLDRAGITGSDGASHNGMWDLSILNVVPGMRVAAPRDASRLREELTEALAVDDGPTALRFPKGEVGEDIPAIERRDGVDILARPASGLHADVLLVAVGSFASTALATADRLGKQGIGVTVVDPRWVLPVPPHVVELAGQHRLVVTLEDSGVHGGAGSAVTAAMQDADVDIPSRDIGVPQQFLEHASRGQVLEELGLTDQHIARKITGWVAAMSREIGDSTVNPAAQQVD.

Residues histidine 71 and 112 to 114 (SHA) each bind thiamine diphosphate. Aspartate 144 contributes to the Mg(2+) binding site. Thiamine diphosphate contacts are provided by residues 145-146 (GA), asparagine 174, tyrosine 285, and glutamate 366. A Mg(2+)-binding site is contributed by asparagine 174.

This sequence belongs to the transketolase family. DXPS subfamily. In terms of assembly, homodimer. Mg(2+) serves as cofactor. It depends on thiamine diphosphate as a cofactor.

It catalyses the reaction D-glyceraldehyde 3-phosphate + pyruvate + H(+) = 1-deoxy-D-xylulose 5-phosphate + CO2. It functions in the pathway metabolic intermediate biosynthesis; 1-deoxy-D-xylulose 5-phosphate biosynthesis; 1-deoxy-D-xylulose 5-phosphate from D-glyceraldehyde 3-phosphate and pyruvate: step 1/1. In terms of biological role, catalyzes the acyloin condensation reaction between C atoms 2 and 3 of pyruvate and glyceraldehyde 3-phosphate to yield 1-deoxy-D-xylulose-5-phosphate (DXP). This Mycobacteroides abscessus (strain ATCC 19977 / DSM 44196 / CCUG 20993 / CIP 104536 / JCM 13569 / NCTC 13031 / TMC 1543 / L948) (Mycobacterium abscessus) protein is 1-deoxy-D-xylulose-5-phosphate synthase.